We begin with the raw amino-acid sequence, 424 residues long: Histidine--tRNA ligase (424 aa).

It belongs to the class-II aminoacyl-tRNA synthetase family. Homodimer.

The protein localises to the cytoplasm. The catalysed reaction is tRNA(His) + L-histidine + ATP = L-histidyl-tRNA(His) + AMP + diphosphate + H(+). This chain is Histidine--tRNA ligase, found in Shewanella denitrificans (strain OS217 / ATCC BAA-1090 / DSM 15013).